The sequence spans 116 residues: Cysteine proteinase inhibitor 1 (116 aa).

An N-terminal signal peptide occupies residues 1 to 26; that stretch reads MVPKPLSLLLFLLLALSAAVVGGRKL. In terms of domain architecture, Cystatin spans 30–89; the sequence is GGWRPIESLNSAEVQDVAQFAVSEHNKQANDELQYQSVVRGYTQVVAGTNYRLVIAAKDG. The short motif at 73 to 77 is the Secondary area of contact element; sequence QVVAG. Asparagine 109 is a glycosylation site (N-linked (GlcNAc...) asparagine).

Belongs to the cystatin family. Phytocystatin subfamily. In terms of processing, glycosylated.

It localises to the secreted. In terms of biological role, specific inhibitor of papain family cysteine proteinases. Inhibits papain, chymopapain, bromelain, ficin, human cathepsins B, H and L, actinidain and house dustmite endopeptidase 1, but does not inhibit human bleomycin hydrolase. Inhibits papain with an IC(50) of 2.47 nM. Does not inhibit cysteine proteinases belonging to other families including clostripain, streptopain and calpain. In Actinidia deliciosa (Kiwi), this protein is Cysteine proteinase inhibitor 1.